We begin with the raw amino-acid sequence, 263 residues long: Putative protein JayE (263 aa).

Belongs to the Mu gp47/PBSX XkdT family.

The protein is Putative protein JayE (jayE) of Escherichia coli (strain K12).